We begin with the raw amino-acid sequence, 682 residues long: TPR repeat-containing thioredoxin TTL4 (682 aa).

Disordered stretches follow at residues 1 to 120 (MSHY…GTPL) and 132 to 157 (NNNN…TGNI). S8 carries the post-translational modification Phosphoserine. Positions 16-39 (KFRDSLSFQRDDDVINKPDFRELD) are enriched in basic and acidic residues. S42 carries the phosphoserine modification. Residues 48–71 (GSSSAAATPAASGSSSSSSGSASG) are compositionally biased toward low complexity. TPR repeat units follow at residues 211 to 244 (SEEV…SPEN), 246 to 278 (AYRS…DPSY), 280 to 312 (RAHQ…PDQA), 402 to 435 (AYVL…DHSN), 449 to 482 (VAKA…DAFN), 483 to 516 (SVLY…QPSY), and 518 to 550 (KALL…LPGD). A Thioredoxin domain is found at 587 to 674 (DKFKTATSLP…MVCPSHQLLE (88 aa)).

Widely expressed.

In terms of biological role, involved in osmotic and salt stress tolerance. May play a role in the control of meristematic cell size during osmotic stress. This Arabidopsis thaliana (Mouse-ear cress) protein is TPR repeat-containing thioredoxin TTL4 (TTL4).